A 161-amino-acid polypeptide reads, in one-letter code: Large ribosomal subunit protein uL16 (161 aa).

The disordered stretch occupies residues 140 to 161; the sequence is LNKGNYKPAKTPVTADDSESSS.

It belongs to the universal ribosomal protein uL16 family. Part of the 50S ribosomal subunit.

Its function is as follows. Binds 23S rRNA and is also seen to make contacts with the A and possibly P site tRNAs. The sequence is that of Large ribosomal subunit protein uL16 from Prochlorococcus marinus (strain NATL1A).